The chain runs to 531 residues: NADH-quinone oxidoreductase subunit N (531 aa).

14 consecutive transmembrane segments (helical) span residues 8–28 (VEYF…AGVL), 41–61 (AQVT…IVVA), 81–101 (ATLF…VFMA), 146–166 (GATQ…MMVF), 172–192 (LLTM…MCGL), 208–228 (FLLG…LYGA), 250–270 (ALAG…AVPF), 282–302 (PTPI…GALL), 318–338 (PVLW…AVNQ), 350–370 (VAHV…GLSA), 372–392 (LFYL…VGLV), 418–438 (IVGV…LTSG), 453–473 (GAVP…YFYV), and 500–520 (AAIA…QPVL).

This sequence belongs to the complex I subunit 2 family. As to quaternary structure, NDH-1 is composed of 14 different subunits. Subunits NuoA, H, J, K, L, M, N constitute the membrane sector of the complex.

It is found in the cell membrane. It carries out the reaction a quinone + NADH + 5 H(+)(in) = a quinol + NAD(+) + 4 H(+)(out). In terms of biological role, NDH-1 shuttles electrons from NADH, via FMN and iron-sulfur (Fe-S) centers, to quinones in the respiratory chain. The immediate electron acceptor for the enzyme in this species is believed to be a menaquinone. Couples the redox reaction to proton translocation (for every two electrons transferred, four hydrogen ions are translocated across the cytoplasmic membrane), and thus conserves the redox energy in a proton gradient. In Mycobacterium tuberculosis (strain CDC 1551 / Oshkosh), this protein is NADH-quinone oxidoreductase subunit N.